The chain runs to 382 residues: uncharacterized protein (382 aa).

This is an uncharacterized protein from Orgyia pseudotsugata multicapsid polyhedrosis virus (OpMNPV).